The chain runs to 478 residues: Protein nucleotidyltransferase YdiU (478 aa).

ATP contacts are provided by Gly84, Gly86, Arg87, Lys107, Asp119, Gly120, Arg170, and Arg177. Asp246 serves as the catalytic Proton acceptor. Mg(2+) contacts are provided by Asn247 and Asp256. Residue Asp256 participates in ATP binding.

Belongs to the SELO family. Mg(2+) serves as cofactor. Requires Mn(2+) as cofactor.

The catalysed reaction is L-seryl-[protein] + ATP = 3-O-(5'-adenylyl)-L-seryl-[protein] + diphosphate. It carries out the reaction L-threonyl-[protein] + ATP = 3-O-(5'-adenylyl)-L-threonyl-[protein] + diphosphate. The enzyme catalyses L-tyrosyl-[protein] + ATP = O-(5'-adenylyl)-L-tyrosyl-[protein] + diphosphate. It catalyses the reaction L-histidyl-[protein] + UTP = N(tele)-(5'-uridylyl)-L-histidyl-[protein] + diphosphate. The catalysed reaction is L-seryl-[protein] + UTP = O-(5'-uridylyl)-L-seryl-[protein] + diphosphate. It carries out the reaction L-tyrosyl-[protein] + UTP = O-(5'-uridylyl)-L-tyrosyl-[protein] + diphosphate. Functionally, nucleotidyltransferase involved in the post-translational modification of proteins. It can catalyze the addition of adenosine monophosphate (AMP) or uridine monophosphate (UMP) to a protein, resulting in modifications known as AMPylation and UMPylation. The chain is Protein nucleotidyltransferase YdiU from Escherichia coli O81 (strain ED1a).